Consider the following 351-residue polypeptide: Cytochrome c biogenesis protein CcsA (351 aa).

8 helical membrane-spanning segments follow: residues 17-37 (VLFL…LPAI), 38-58 (NALG…LLGA), 68-88 (LSNL…VHLI), 97-117 (LVGV…TLTL), 143-163 (MMLS…FLVI), 259-279 (IIGL…VWAN), 286-306 (WSWD…AAYL), and 320-340 (AILA…VNLL).

The protein belongs to the CcmF/CycK/Ccl1/NrfE/CcsA family. As to quaternary structure, may interact with ccs1.

Its subcellular location is the cellular thylakoid membrane. In terms of biological role, required during biogenesis of c-type cytochromes (cytochrome c6 and cytochrome f) at the step of heme attachment. The sequence is that of Cytochrome c biogenesis protein CcsA from Trichormus variabilis (strain ATCC 29413 / PCC 7937) (Anabaena variabilis).